The chain runs to 179 residues: Ribosome-recycling factor (179 aa).

The protein belongs to the RRF family.

The protein localises to the cytoplasm. Its function is as follows. Responsible for the release of ribosomes from messenger RNA at the termination of protein biosynthesis. May increase the efficiency of translation by recycling ribosomes from one round of translation to another. The protein is Ribosome-recycling factor of Chlamydia muridarum (strain MoPn / Nigg).